The sequence spans 409 residues: LL-diaminopimelate aminotransferase (409 aa).

Residues tyrosine 15 and glycine 42 each contribute to the substrate site. Pyridoxal 5'-phosphate is bound by residues tyrosine 72, 108 to 109 (AK), tyrosine 132, asparagine 186, tyrosine 217, and 245 to 247 (SFS). Residues lysine 109, tyrosine 132, and asparagine 186 each coordinate substrate. An N6-(pyridoxal phosphate)lysine modification is found at lysine 248. Pyridoxal 5'-phosphate contacts are provided by arginine 256 and asparagine 291. Residues asparagine 291 and arginine 387 each coordinate substrate.

This sequence belongs to the class-I pyridoxal-phosphate-dependent aminotransferase family. LL-diaminopimelate aminotransferase subfamily. As to quaternary structure, homodimer. It depends on pyridoxal 5'-phosphate as a cofactor.

The enzyme catalyses (2S,6S)-2,6-diaminopimelate + 2-oxoglutarate = (S)-2,3,4,5-tetrahydrodipicolinate + L-glutamate + H2O + H(+). Its pathway is amino-acid biosynthesis; L-lysine biosynthesis via DAP pathway; LL-2,6-diaminopimelate from (S)-tetrahydrodipicolinate (aminotransferase route): step 1/1. Its function is as follows. Involved in the synthesis of meso-diaminopimelate (m-DAP or DL-DAP), required for both lysine and peptidoglycan biosynthesis. Catalyzes the direct conversion of tetrahydrodipicolinate to LL-diaminopimelate. This chain is LL-diaminopimelate aminotransferase, found in Phocaeicola vulgatus (strain ATCC 8482 / DSM 1447 / JCM 5826 / CCUG 4940 / NBRC 14291 / NCTC 11154) (Bacteroides vulgatus).